The following is a 399-amino-acid chain: DNA polymerase IV (399 aa).

The 183-residue stretch at 5 to 187 folds into the UmuC domain; sequence ILHCDLNNFY…LPVEALLYVG (183 aa). Mg(2+) contacts are provided by Asp-9 and Asp-105. The active site involves Glu-106.

This sequence belongs to the DNA polymerase type-Y family. In terms of assembly, monomer. Mg(2+) serves as cofactor.

Its subcellular location is the cytoplasm. The catalysed reaction is DNA(n) + a 2'-deoxyribonucleoside 5'-triphosphate = DNA(n+1) + diphosphate. Poorly processive, error-prone DNA polymerase involved in untargeted mutagenesis. Copies undamaged DNA at stalled replication forks, which arise in vivo from mismatched or misaligned primer ends. These misaligned primers can be extended by PolIV. Exhibits no 3'-5' exonuclease (proofreading) activity. May be involved in translesional synthesis, in conjunction with the beta clamp from PolIII. The chain is DNA polymerase IV from Acetivibrio thermocellus (strain ATCC 27405 / DSM 1237 / JCM 9322 / NBRC 103400 / NCIMB 10682 / NRRL B-4536 / VPI 7372) (Clostridium thermocellum).